We begin with the raw amino-acid sequence, 194 residues long: Oligoribonuclease (194 aa).

In terms of domain architecture, Exonuclease spans 11–174 (LIWIDLEMTG…SDVRDSIDEL (164 aa)). Tyrosine 132 is an active-site residue.

This sequence belongs to the oligoribonuclease family.

It localises to the cytoplasm. 3'-to-5' exoribonuclease specific for small oligoribonucleotides. This chain is Oligoribonuclease, found in Xanthomonas euvesicatoria pv. vesicatoria (strain 85-10) (Xanthomonas campestris pv. vesicatoria).